A 1134-amino-acid chain; its full sequence is Nck-associated protein 1-like (1134 aa).

The tract at residues 638–671 (KAKNKKSMKQRQAPRKGEPERDKPGAESHRKNRS) is disordered. The segment covering 639–651 (AKNKKSMKQRQAP) has biased composition (basic residues). Basic and acidic residues predominate over residues 652–666 (RKGEPERDKPGAESH). The chain crosses the membrane as a helical span at residues 999 to 1019 (LLLIFLAVSLPLLATDPSSFF).

As to quaternary structure, in hematopoietic cells, component of the WAVE2 complex composed of ABI1, CYFIP1/SRA1, NCKAP1L/HEM1 and WASF2/WAVE2. Interacts with ARHGAP4, PIK3C3/VPS34 and PPP1R12A/MYPT1. Interacts with mammalian target of rapamycin complex 2 (mTORC2) components, including MTOR and RICTOR. In terms of tissue distribution, predominantly expressed in developing and mature hematopoietic cells. Also detected in urogenital tissues, including testis.

It is found in the membrane. The protein resides in the cytoplasm. Essential hematopoietic-specific regulator of the actin cytoskeleton. Controls lymphocyte development, activation, proliferation and homeostasis, erythrocyte membrane stability, as well as phagocytosis and migration by neutrophils and macrophages. Component of the WAVE2 complex which signals downstream of RAC to stimulate F-actin polymerization. Required for stabilization and/or translation of the WAVE2 complex proteins in hematopoietic cells. Within the WAVE2 complex, enables the cortical actin network to restrain excessive degranulation and granule release by T-cells. Required for efficient T-lymphocyte and neutrophil migration. Exhibits complex cycles of activation and inhibition to generate waves of propagating the assembly with actin. Also involved in mechanisms WAVE independent to regulate myosin and actin polymerization during neutrophil chemotaxis. In T-cells, required for proper mechanistic target of rapamycin complex 2 (mTORC2)-dependent AKT phosphorylation, cell proliferation and cytokine secretion, including that of IL2 and TNF. The polypeptide is Nck-associated protein 1-like (Mus musculus (Mouse)).